A 227-amino-acid polypeptide reads, in one-letter code: Interleukin-6 (227 aa).

The N-terminal stretch at 1–22 (MASISYLLAPLVLAAVLQPTAG) is a signal peptide. The interval 24 to 45 (PLDAPTESPAGETSGEEAETGS) is disordered. Cysteines 93 and 103 form a disulfide.

The protein belongs to the IL-6 superfamily. As to quaternary structure, component of a hexamer of two molecules each of IL6, IL6R and IL6ST; first binds to IL6R to associate with the signaling subunit IL6ST. As to expression, after induction, highly expressed in spleen. Can also be expressed in kidney after incubation with PHA.

It is found in the secreted. Its function is as follows. Cytokine with a wide variety of biological functions in immunity, tissue regeneration, and metabolism. Binds to IL6R, then the complex associates to the signaling subunit IL6ST/gp130 to trigger the intracellular IL6-signaling pathway. The interaction with the membrane-bound IL6R and IL6ST stimulates 'classic signaling', whereas the binding of IL6 and soluble IL6R to IL6ST stimulates 'trans-signaling'. Alternatively, 'cluster signaling' occurs when membrane-bound IL6:IL6R complexes on transmitter cells activate IL6ST receptors on neighboring receiver cells. The sequence is that of Interleukin-6 (il6) from Takifugu rubripes (Japanese pufferfish).